Reading from the N-terminus, the 185-residue chain is dTTP/UTP pyrophosphatase (185 aa).

Asp-67 acts as the Proton acceptor in catalysis.

Belongs to the Maf family. YhdE subfamily. A divalent metal cation is required as a cofactor.

Its subcellular location is the cytoplasm. It carries out the reaction dTTP + H2O = dTMP + diphosphate + H(+). It catalyses the reaction UTP + H2O = UMP + diphosphate + H(+). Functionally, nucleoside triphosphate pyrophosphatase that hydrolyzes dTTP and UTP. May have a dual role in cell division arrest and in preventing the incorporation of modified nucleotides into cellular nucleic acids. The chain is dTTP/UTP pyrophosphatase from Lacticaseibacillus casei (strain BL23) (Lactobacillus casei).